The chain runs to 216 residues: 3-keto-L-gulonate-6-phosphate decarboxylase UlaD (216 aa).

Residue aspartate 11 participates in substrate binding. Residues glutamate 33 and aspartate 62 each contribute to the Mg(2+) site. Arginine 192 is a substrate binding site.

It belongs to the HPS/KGPDC family. KGPDC subfamily. In terms of assembly, homodimer. Requires Mg(2+) as cofactor.

The catalysed reaction is 3-dehydro-L-gulonate 6-phosphate + H(+) = L-xylulose 5-phosphate + CO2. It functions in the pathway cofactor degradation; L-ascorbate degradation; D-xylulose 5-phosphate from L-ascorbate: step 2/4. Functionally, catalyzes the decarboxylation of 3-keto-L-gulonate-6-P into L-xylulose-5-P. Is involved in the anaerobic L-ascorbate utilization. This is 3-keto-L-gulonate-6-phosphate decarboxylase UlaD from Shigella boydii serotype 18 (strain CDC 3083-94 / BS512).